The sequence spans 234 residues: Transcriptional regulatory protein CseB (234 aa).

A Response regulatory domain is found at 6 to 119 (HVLFVEDDDV…VLVARIRAVL (114 aa)). D55 carries the post-translational modification 4-aspartylphosphate. A DNA-binding region (ompR/PhoB-type) is located at residues 140–234 (GGVLTFGDLE…VRGFGYKLKA (95 aa)).

Post-translationally, phosphorylated by CseC.

The protein localises to the cytoplasm. Its function is as follows. Member of the two-component regulatory system CseB/CseC involved in the stability of the cell envelope. CseB activates transcription of RNA polymerase sigma-E factor, in response to changes in the cell envelope. The sequence is that of Transcriptional regulatory protein CseB (cseB) from Streptomyces coelicolor (strain ATCC BAA-471 / A3(2) / M145).